The sequence spans 305 residues: Olfactory receptor 4F17 (305 aa).

The Extracellular portion of the chain corresponds to 1–18 (MVTEFIFLGLSDSQGLQT). A helical membrane pass occupies residues 19 to 42 (FLFMLFFVFYGGIVFGNLLIVITV). The Cytoplasmic portion of the chain corresponds to 43 to 50 (VSDSHLHS). A helical membrane pass occupies residues 51 to 72 (PMYFLLANLSLIDLSLSSVTAP). Residues 73-93 (KMITDFFSQRKVISFKGCLVQ) lie on the Extracellular side of the membrane. An intrachain disulfide couples C90 to C182. The helical transmembrane segment at 94–113 (IFLLHFFGGSEMVILIAMGF) threads the bilayer. The Cytoplasmic portion of the chain corresponds to 114–132 (DRYIAICKPLHYTTIMCGN). A helical transmembrane segment spans residues 133 to 151 (ACVGIMAVAWGIGFLHSVS). Residues 152–188 (QLAFAVHLPFCGPNEVDSFYCDLPRVIKLACTDTYRL) are Extracellular-facing. The helical transmembrane segment at 189-212 (DIMVIANSGVLTVCSFVLLIISYT) threads the bilayer. Residues 213–228 (IILMTIQHRPLDKSSK) lie on the Cytoplasmic side of the membrane. The chain crosses the membrane as a helical span at residues 229 to 251 (ALSTLTAHITVVLLFFGPCVFIY). Over 252–262 (AWPFPIKSLDK) the chain is Extracellular. A helical membrane pass occupies residues 263–282 (FLAVFYSVITPLLNPIIYTL). At 283–305 (RNKDMKTAIRQLRKWDAHSSVKF) the chain is on the cytoplasmic side.

The protein belongs to the G-protein coupled receptor 1 family.

It is found in the cell membrane. Its function is as follows. Odorant receptor. This is Olfactory receptor 4F17 (OR4F17) from Homo sapiens (Human).